We begin with the raw amino-acid sequence, 175 residues long: Type II restriction enzyme NgoBV (175 aa).

It carries out the reaction Endonucleolytic cleavage of DNA to give specific double-stranded fragments with terminal 5'-phosphates.. A P subtype restriction enzyme that recognizes the double-stranded sequence 5'-GGNNCC-3'; the cleavage site is unknown. This Neisseria gonorrhoeae protein is Type II restriction enzyme NgoBV (ngoBVR).